The following is a 271-amino-acid chain: Low choriolytic enzyme (271 aa).

The signal sequence occupies residues 1 to 20; it reads MDLLAKASVLLLLLLSLSNA. The propeptide at 21–71 is activation peptide; sequence QTDNMEEAENGSSKEEIDESELEDVSSIIFRMNNNSMEELLEGDLVLPKTR. Residues asparagine 30 and asparagine 54 are each glycosylated (N-linked (GlcNAc...) asparagine). The Peptidase M12A domain maps to 72 to 271; sequence NAMKCFGAPD…ILRVNKLYKC (200 aa). 3 cysteine pairs are disulfide-bonded: cysteine 76–cysteine 83, cysteine 123–cysteine 271, and cysteine 144–cysteine 164. Histidine 172 lines the Zn(2+) pocket. Glutamate 173 is an active-site residue. Histidine 176 and histidine 182 together coordinate Zn(2+). Asparagine 211 carries N-linked (GlcNAc...) asparagine glycosylation.

Zn(2+) serves as cofactor.

It localises to the zymogen granule. It catalyses the reaction Hydrolysis of the inner layer of fish egg envelope. Also hydrolysis of casein and small molecule substrates such as succinyl-Leu-Leu-Val-Tyr-|-7-(4-methyl)coumarylamide.. Participates in the breakdown of the egg envelope, which is derived from the egg extracellular matrix, at the time of hatching. Thus allowing the newly hatched fish to swim free. LCE solubilizes the egg envelope only after it has been swollen by the action of HCE. The sequence is that of Low choriolytic enzyme (lce) from Oryzias latipes (Japanese rice fish).